The primary structure comprises 282 residues: Putative dolichyldiphosphatase (282 aa).

The next 2 helical transmembrane spans lie at 26–46 (LLCA…ATLI) and 93–113 (MPSS…LFLL). Residues 121-153 (QQQQQQQKQKQRERKKQVTNVKTTTTNGSGNGS) form a disordered region. Over residues 138-148 (VTNVKTTTTNG) the composition is skewed to low complexity. 2 consecutive transmembrane segments (helical) span residues 173-193 (WSFA…GAVA) and 207-227 (VLVG…VTHV).

It belongs to the dolichyldiphosphatase family.

The protein resides in the endoplasmic reticulum membrane. It carries out the reaction a di-trans,poly-cis-dolichyl diphosphate + H2O = a di-trans,poly-cis-dolichyl phosphate + phosphate + H(+). It functions in the pathway protein modification; protein glycosylation. The polypeptide is Putative dolichyldiphosphatase (Neurospora crassa (strain ATCC 24698 / 74-OR23-1A / CBS 708.71 / DSM 1257 / FGSC 987)).